The sequence spans 122 residues: Spermidine export protein MdtJ (122 aa).

4 consecutive transmembrane segments (helical) span residues 1 to 21, 31 to 51, 54 to 74, and 81 to 101; these read MIYW…TLSM, TGHI…SMAV, VALG…ITLF, and EPIS…IMLV.

Belongs to the drug/metabolite transporter (DMT) superfamily. Small multidrug resistance (SMR) (TC 2.A.7.1) family. MdtJ subfamily. In terms of assembly, forms a complex with MdtI.

Its subcellular location is the cell inner membrane. In terms of biological role, catalyzes the excretion of spermidine. The chain is Spermidine export protein MdtJ from Serratia proteamaculans (strain 568).